A 525-amino-acid polypeptide reads, in one-letter code: GMP synthase [glutamine-hydrolyzing] (525 aa).

The region spanning 9 to 207 (RILILDFGSQ…VRDICQCEAL (199 aa)) is the Glutamine amidotransferase type-1 domain. Cys-86 acts as the Nucleophile in catalysis. Residues His-181 and Glu-183 contribute to the active site. Positions 208-400 (WTPAKIIDDA…LGLPYDMLYR (193 aa)) constitute a GMPS ATP-PPase domain. 235 to 241 (SGGVDSS) contributes to the ATP binding site.

Homodimer.

It carries out the reaction XMP + L-glutamine + ATP + H2O = GMP + L-glutamate + AMP + diphosphate + 2 H(+). Its pathway is purine metabolism; GMP biosynthesis; GMP from XMP (L-Gln route): step 1/1. Catalyzes the synthesis of GMP from XMP. This is GMP synthase [glutamine-hydrolyzing] from Enterobacter sp. (strain 638).